The chain runs to 284 residues: MKKLTTLLLASTLLIAACGNDDSKKDDSKTSKKDDGVKAELKQATKAYDKYTDEQLNEFLKGTEKFVKAIENNDMAQAKALYPKVRMYYERSEPVAEAFGDLDPKIDARLADMKEEKKEKEWSGYHKIEKALYEDKKIDDVTKKDAQQLLKDAKELHAKADTLDIIPKLMLQGSVDLLNEVATSKITGEEEIYSHTDLYDFKANVEGAQKIYDLFKPILEKKDKKLSDDIQMNFDKVNQLLDKYKDNNGGYESFEKVSKKDRKAFADAVNALGEPLSKMAVITE.

An N-terminal signal peptide occupies residues 1-17; the sequence is MKKLTTLLLASTLLIAA. C18 is lipidated: N-palmitoyl cysteine. The S-diacylglycerol cysteine moiety is linked to residue C18.

The protein belongs to the EfeM/EfeO family.

The protein resides in the cell membrane. The chain is Efem/EfeO family lipoprotein from Staphylococcus aureus (strain USA300).